The sequence spans 1703 residues: Gingipain R1 (1703 aa).

The N-terminal stretch at 1-20 is a signal peptide; it reads MNKFVSIALCSSLLGGMAFA. The propeptide occupies 21 to 224; that stretch reads QQTELGRNPN…RMFMNYEPGR (204 aa). Positions 302, 324, 327, 329, 331, 385, and 390 each coordinate Ca(2+). The active-site Proton donor is H435. C468 serves as the catalytic Nucleophile. Ca(2+) contacts are provided by F473, E482, D516, E517, E520, and H526. The segment at 940–968 is disordered; that stretch reads WDAPNGTPNPNPNPNPNPNPGTTTLSESF. Residues 946–958 are compositionally biased toward pro residues; the sequence is TPNPNPNPNPNPN.

This sequence belongs to the peptidase C25 family.

It is found in the secreted. It carries out the reaction Hydrolysis of proteins and small molecule substrates, with a preference for Arg in P1.. Functionally, thiol protease. Acts synergistically with RgpB to catalyze the maturation of fimbrial subunits, such as FimA. Its proteolytic activity is a major factor in both periodontal tissue destruction and in evasion of host defense mechanisms. This chain is Gingipain R1, found in Porphyromonas gingivalis (strain ATCC 33277 / DSM 20709 / CIP 103683 / JCM 12257 / NCTC 11834 / 2561).